The following is a 456-amino-acid chain: RuvB-like helicase 1 (456 aa).

70-77 (GPPGTGKT) is a binding site for ATP.

Belongs to the RuvB family. Forms homohexameric rings. May form a dodecamer with rept made of two stacked hexameric rings. Component of the chromatin remodeling Ino80 complex.

The protein localises to the nucleus. It carries out the reaction ATP + H2O = ADP + phosphate + H(+). In terms of biological role, acts as a transcriptional coactivator in Wg signaling caused by altered arm signaling. Pont and rept interfere antagonistically with nuclear arm signaling function, and are required to enhance or reduce arm activity, respectively. Also an essential cofactor for the normal function of Myc; required for cellular proliferation and growth. Proposed core component of the chromatin remodeling Ino80 complex which is involved in transcriptional regulation, DNA replication and probably DNA repair. The chain is RuvB-like helicase 1 from Drosophila pseudoobscura pseudoobscura (Fruit fly).